The following is a 117-amino-acid chain: Prefoldin subunit beta (117 aa).

This sequence belongs to the prefoldin subunit beta family. In terms of assembly, heterohexamer of two alpha and four beta subunits.

Its subcellular location is the cytoplasm. Its function is as follows. Molecular chaperone capable of stabilizing a range of proteins. Seems to fulfill an ATP-independent, HSP70-like function in archaeal de novo protein folding. This is Prefoldin subunit beta (pfdB) from Pyrococcus abyssi (strain GE5 / Orsay).